Reading from the N-terminus, the 262-residue chain is Pyridoxine 5'-phosphate synthase (262 aa).

N6 lines the 3-amino-2-oxopropyl phosphate pocket. A 1-deoxy-D-xylulose 5-phosphate-binding site is contributed by 8–9; it reads DH. R17 is a 3-amino-2-oxopropyl phosphate binding site. Residue H43 is the Proton acceptor of the active site. Residues R45 and H50 each coordinate 1-deoxy-D-xylulose 5-phosphate. Residue E70 is the Proton acceptor of the active site. T102 serves as a coordination point for 1-deoxy-D-xylulose 5-phosphate. The active-site Proton donor is H215. Residues G216 and 237-238 each bind 3-amino-2-oxopropyl phosphate; that span reads GH.

Belongs to the PNP synthase family. As to quaternary structure, homooctamer; tetramer of dimers.

The protein resides in the cytoplasm. It catalyses the reaction 3-amino-2-oxopropyl phosphate + 1-deoxy-D-xylulose 5-phosphate = pyridoxine 5'-phosphate + phosphate + 2 H2O + H(+). It functions in the pathway cofactor biosynthesis; pyridoxine 5'-phosphate biosynthesis; pyridoxine 5'-phosphate from D-erythrose 4-phosphate: step 5/5. Its function is as follows. Catalyzes the complicated ring closure reaction between the two acyclic compounds 1-deoxy-D-xylulose-5-phosphate (DXP) and 3-amino-2-oxopropyl phosphate (1-amino-acetone-3-phosphate or AAP) to form pyridoxine 5'-phosphate (PNP) and inorganic phosphate. This is Pyridoxine 5'-phosphate synthase from Helicobacter pylori (strain HPAG1).